We begin with the raw amino-acid sequence, 597 residues long: Protein disulfide isomerase-like 1-4 (597 aa).

The N-terminal stretch at 1–25 (MAFRVLLLFSLTALLIFSAVSPSFA) is a signal peptide. Composition is skewed to acidic residues over residues 37–49 (LSFLEDLKEDDVP) and 61–84 (DEFEGGEEEDPDMYNDDDDEEGDF). The tract at residues 37-101 (LSFLEDLKED…SDPLPTPEID (65 aa)) is disordered. A Thioredoxin 1 domain is found at 85–208 (SDLGNPDSDP…IVTWVKKKIG (124 aa)). N-linked (GlcNAc...) asparagine glycosylation is present at N112. Catalysis depends on nucleophile residues C132 and C135. C132 and C135 form a disulfide bridge. 2 N-linked (GlcNAc...) asparagine glycosylation sites follow: N213 and N342. The Thioredoxin 2 domain maps to 429 to 550 (FYKSDPIPEK…FYKFLRKHAT (122 aa)). Active-site nucleophile residues include C471 and C474. An intrachain disulfide couples C471 to C474. The N-linked (GlcNAc...) asparagine glycan is linked to N524. The interval 555–597 (LEKPASTESPKTAESTPKVETTETKESPDSTTKSSQSDSKDEL) is disordered. Positions 560 to 573 (STESPKTAESTPKV) are enriched in polar residues. A Prevents secretion from ER motif is present at residues 594 to 597 (KDEL).

Belongs to the protein disulfide isomerase family. In terms of assembly, interacts with MEE8 and MED37A. In terms of tissue distribution, expressed in germinating seedling, including the cotyledons and hypocotyl, in vascular tissues, in pollen grains, root tips, leaf trichomes, developing seeds and siliques.

The protein localises to the endoplasmic reticulum lumen. It is found in the golgi apparatus. Its subcellular location is the vacuole. The protein resides in the nucleus. It localises to the secreted. The protein localises to the cell wall. The enzyme catalyses Catalyzes the rearrangement of -S-S- bonds in proteins.. Acts as a protein-folding catalyst that interacts with nascent polypeptides to catalyze the formation, isomerization, and reduction or oxidation of disulfide bonds. The chain is Protein disulfide isomerase-like 1-4 (PDIL1-4) from Arabidopsis thaliana (Mouse-ear cress).